Here is a 562-residue protein sequence, read N- to C-terminus: NAD-dependent histone deacetylase SIR2 (562 aa).

The interval 1–67 is disordered; it reads MTIPHMKYAV…RETNTTDPLG (67 aa). The segment covering 11–25 has biased composition (polar residues); that stretch reads SKTSENKVSNTVSPT. Residues 26 to 36 are compositionally biased toward basic and acidic residues; sequence QDKDAIRKQPD. In terms of domain architecture, Deacetylase sirtuin-type spans 237–527; the sequence is RLSNFFTIDH…AMVAQKCGWT (291 aa). NAD(+) contacts are provided by residues 262 to 281 and 344 to 347; these read GAGV…EGFY and QNID. Catalysis depends on His364, which acts as the Proton acceptor. Residues Cys372, Cys375, Cys396, and Cys399 each contribute to the Zn(2+) site. Residues 471 to 473, 496 to 498, and Cys513 contribute to the NAD(+) site; these read GTS and NRD.

The protein belongs to the sirtuin family. Class I subfamily. In terms of assembly, homomultimer. Forms a complex with SIR3 and SIR4. Component of the RENT complex, at least composed of SIR2, CDC14 and NET1. The RENT complex interacts with FOB1. Interacts with ESC8. Interacts with and ZDS2. Interacts with MCM10. Interacts with SLX5. Interacts with NSI1. It depends on Zn(2+) as a cofactor.

It localises to the nucleus. Its subcellular location is the nucleolus. It carries out the reaction N(6)-acetyl-L-lysyl-[protein] + NAD(+) + H2O = 2''-O-acetyl-ADP-D-ribose + nicotinamide + L-lysyl-[protein]. Its activity is increased by calorie restriction, which slows the pace of aging and increases maximum lifespan. Activated by resveratrol (3,5,4'-trihydroxy-trans-stilbene), which is found in red wine. Its function is as follows. NAD-dependent deacetylase, which participates in a wide range of cellular events including chromosome silencing, chromosome segregation, DNA recombination and the determination of life span. Involved in transcriptional repression of the silent mating-type loci HML and HMR and telomeric silencing via its association with SIR3 and SIR4. Plays a central role in ribosomal DNA (rDNA) silencing via its association with the RENT complex, preventing hyperrecombination, and repressing transcription from foreign promoters, which contributes to extending life span. Probably represses transcription via the formation of heterochromatin structure, which involves the compaction of chromatin fiber into a more condensed form, although this complex in at least one case can still bind euchromatic levels of positive transcription regulators. Although it displays some NAD-dependent histone deacetylase activity on histone H3K9Ac and H3K14Ac and histone H4K16Ac in vitro, such activity is unclear in vivo and may not be essential. The chain is NAD-dependent histone deacetylase SIR2 (SIR2) from Saccharomyces cerevisiae (strain ATCC 204508 / S288c) (Baker's yeast).